The following is a 110-amino-acid chain: Vacuolar ATPase assembly integral membrane protein VMA21 (110 aa).

A disordered region spans residues 1–28; that stretch reads MTTRRIIGQDGEEKTYLDVDPRGPPGPS. The Cytoplasmic portion of the chain corresponds to 1–44; the sequence is MTTRRIIGQDGEEKTYLDVDPRGPPGPSNISPAVPASVIWKLMS. Basic and acidic residues predominate over residues 11-21; it reads GEEKTYLDVDP. The helical transmembrane segment at 45 to 65 threads the bilayer; the sequence is FTFAMITLPIGTYFFTVNYVF. Over 66–71 the chain is Lumenal; sequence GGNATY. The helical transmembrane segment at 72-92 threads the bilayer; the sequence is AGALAAIMANVVLIAYVIMAF. At 93-110 the chain is on the cytoplasmic side; sequence KDDQAEQAEDAREAKKEL. Positions 107–110 match the Prevents secretion from ER motif; it reads KKEL.

It belongs to the VMA21 family.

It is found in the endoplasmic reticulum membrane. The protein resides in the endoplasmic reticulum-Golgi intermediate compartment membrane. It localises to the cytoplasmic vesicle. Its subcellular location is the COPII-coated vesicle membrane. Functionally, required for the assembly of the V0 complex of the vacuolar ATPase (V-ATPase) in the endoplasmic reticulum. The protein is Vacuolar ATPase assembly integral membrane protein VMA21 of Phaeosphaeria nodorum (strain SN15 / ATCC MYA-4574 / FGSC 10173) (Glume blotch fungus).